Reading from the N-terminus, the 281-residue chain is Cytochrome c oxidase subunit 3 (281 aa).

Helical transmembrane passes span 34–54 (PWPI…VMTF), 59–79 (NGLF…TLWF), 103–123 (GFVL…WAFF), 148–168 (WEVP…VTYA), 179–199 (VIYG…FQGF), 220–240 (ATGF…VGLF), and 259–279 (ILYW…VYWW).

This sequence belongs to the cytochrome c oxidase subunit 3 family. As to quaternary structure, component of the cytochrome c oxidase (complex IV, CIV), a multisubunit enzyme composed of a catalytic core of 3 subunits and several supernumerary subunits. The complex exists as a monomer or a dimer and forms supercomplexes (SCs) in the inner mitochondrial membrane with ubiquinol-cytochrome c oxidoreductase (cytochrome b-c1 complex, complex III, CIII).

The protein localises to the mitochondrion inner membrane. The enzyme catalyses 4 Fe(II)-[cytochrome c] + O2 + 8 H(+)(in) = 4 Fe(III)-[cytochrome c] + 2 H2O + 4 H(+)(out). Its function is as follows. Component of the cytochrome c oxidase, the last enzyme in the mitochondrial electron transport chain which drives oxidative phosphorylation. The respiratory chain contains 3 multisubunit complexes succinate dehydrogenase (complex II, CII), ubiquinol-cytochrome c oxidoreductase (cytochrome b-c1 complex, complex III, CIII) and cytochrome c oxidase (complex IV, CIV), that cooperate to transfer electrons derived from NADH and succinate to molecular oxygen, creating an electrochemical gradient over the inner membrane that drives transmembrane transport and the ATP synthase. Cytochrome c oxidase is the component of the respiratory chain that catalyzes the reduction of oxygen to water. Electrons originating from reduced cytochrome c in the intermembrane space (IMS) are transferred via the dinuclear copper A center (CU(A)) of subunit 2 and heme A of subunit 1 to the active site in subunit 1, a binuclear center (BNC) formed by heme A3 and copper B (CU(B)). The BNC reduces molecular oxygen to 2 water molecules using 4 electrons from cytochrome c in the IMS and 4 protons from the mitochondrial matrix. The chain is Cytochrome c oxidase subunit 3 (COX3) from Rhizopus stolonifer (Rhizopus nigricans).